Reading from the N-terminus, the 310-residue chain is Putative S-adenosyl-L-methionine-dependent methyltransferase MUL_4762 (310 aa).

S-adenosyl-L-methionine contacts are provided by residues Asp-132 and Asp-161–Leu-162.

It belongs to the UPF0677 family.

Its function is as follows. Exhibits S-adenosyl-L-methionine-dependent methyltransferase activity. The chain is Putative S-adenosyl-L-methionine-dependent methyltransferase MUL_4762 from Mycobacterium ulcerans (strain Agy99).